A 559-amino-acid polypeptide reads, in one-letter code: Alpha-(1,6)-fucosyltransferase (559 aa).

Over 1–4 the chain is Cytoplasmic; it reads MLKC. The helical; Signal-anchor for type II membrane protein transmembrane segment at 5–24 threads the bilayer; sequence IAAVGTVVWMTMFLFLYSQL. The Lumenal portion of the chain corresponds to 25 to 559; that stretch reads SNNQSGGDSI…RKFKFEALLD (535 aa). Residue asparagine 27 is glycosylated (N-linked (GlcNAc...) asparagine). The span at 63–74 shows a compositional bias: basic and acidic residues; sequence QERNDQHKKIME. Positions 63 to 90 are disordered; the sequence is QERNDQHKKIMEQSHQLPPNPENPSLPK. The segment covering 80–90 has biased composition (pro residues); the sequence is PPNPENPSLPK. An N-linked (GlcNAc...) asparagine glycan is attached at asparagine 134. 3 cysteine pairs are disulfide-bonded: cysteine 188–cysteine 251, cysteine 196–cysteine 214, and cysteine 202–cysteine 206. The GT23 domain occupies 190–480; the sequence is EAKTLVCNLD…ADDGSKFHSL (291 aa). The interval 351–352 is important for donor substrate binding; sequence RR. Cysteine 452 and cysteine 459 are joined by a disulfide. An SH3 domain is found at 489–550; sequence QQAHEVIVIE…PSYKVVNDWR (62 aa).

The protein belongs to the glycosyltransferase 23 family. It depends on Mn(2+) as a cofactor. The cofactor is Mg(2+).

It is found in the golgi apparatus. The protein resides in the golgi stack membrane. The enzyme catalyses N(4)-{beta-D-GlcNAc-(1-&gt;2)-alpha-D-Man-(1-&gt;3)-[beta-D-GlcNAc-(1-&gt;2)-alpha-D-Man-(1-&gt;6)]-beta-D-Man-(1-&gt;4)-beta-D-GlcNAc-(1-&gt;4)-beta-D-GlcNAc}-L-asparaginyl-[protein] + GDP-beta-L-fucose = an N(4)-{beta-D-GlcNAc-(1-&gt;2)-alpha-D-Man-(1-&gt;3)-[beta-D-GlcNAc-(1-&gt;2)-alpha-D-Man-(1-&gt;6)]-beta-D-Man-(1-&gt;4)-beta-D-GlcNAc-(1-&gt;4)-[alpha-L-Fuc-(1-&gt;6)]-beta-D-GlcNAc}-L-asparaginyl-[protein] + GDP + H(+). It participates in protein modification; protein glycosylation. Its activity is regulated as follows. Inhibited by Fe(3+), Ni(2+) and Cu(2+). Its function is as follows. Catalyzes the addition of fucose in alpha 1-6 linkage to the first GlcNAc residue, next to the peptide chains in N-glycans. The addition is prevented if the GlcNAc residue is already fucosylated. Involved in susceptibility to the nematotoxic C.cinerea galectin Cgl2, likely by contributing to the synthesis of core alpha-1,6-fucosylated N-glycans to which Cgl2 binds. The polypeptide is Alpha-(1,6)-fucosyltransferase (Caenorhabditis elegans).